Here is a 117-residue protein sequence, read N- to C-terminus: 5-hydroxyisourate hydrolase (117 aa).

Positions 7, 45, and 114 each coordinate substrate.

Belongs to the transthyretin family. 5-hydroxyisourate hydrolase subfamily. Homotetramer.

It carries out the reaction 5-hydroxyisourate + H2O = 5-hydroxy-2-oxo-4-ureido-2,5-dihydro-1H-imidazole-5-carboxylate + H(+). Its function is as follows. Catalyzes the hydrolysis of 5-hydroxyisourate (HIU) to 2-oxo-4-hydroxy-4-carboxy-5-ureidoimidazoline (OHCU). The chain is 5-hydroxyisourate hydrolase from Ralstonia nicotianae (strain ATCC BAA-1114 / GMI1000) (Ralstonia solanacearum).